Consider the following 119-residue polypeptide: Large ribosomal subunit protein bL20 (119 aa).

Belongs to the bacterial ribosomal protein bL20 family.

In terms of biological role, binds directly to 23S ribosomal RNA and is necessary for the in vitro assembly process of the 50S ribosomal subunit. It is not involved in the protein synthesizing functions of that subunit. This chain is Large ribosomal subunit protein bL20, found in Coxiella burnetii (strain CbuK_Q154) (Coxiella burnetii (strain Q154)).